A 126-amino-acid polypeptide reads, in one-letter code: Histone H2B type 1-B (126 aa).

Low complexity predominate over residues 1-12 (MPEPSKSAPAPK). Residues 1-35 (MPEPSKSAPAPKKGSKKAITKAQKKDGKKRKRSRK) form a disordered region. At Pro-2 the chain carries N-acetylproline. ADP-ribosyl glutamic acid is present on Glu-3. Lys-6 carries the post-translational modification N6-(2-hydroxyisobutyryl)lysine; alternate. Lys-6 is subject to N6-(beta-hydroxybutyryl)lysine; alternate. The residue at position 6 (Lys-6) is an N6-acetyllysine; alternate. Position 6 is an N6-butyryllysine; alternate (Lys-6). Lys-6 is modified (N6-crotonyllysine; alternate). The residue at position 6 (Lys-6) is an N6-lactoyllysine; alternate. A Glycyl lysine isopeptide (Lys-Gly) (interchain with G-Cter in SUMO2); alternate cross-link involves residue Lys-6. Ser-7 carries the ADP-ribosylserine modification. Lys-12 is modified (N6-(beta-hydroxybutyryl)lysine; alternate). 2 positions are modified to N6-acetyllysine; alternate: Lys-12 and Lys-13. N6-crotonyllysine; alternate is present on residues Lys-12 and Lys-13. At Lys-12 the chain carries N6-lactoyllysine; alternate. At Lys-13 the chain carries N6-(2-hydroxyisobutyryl)lysine; alternate. A Phosphoserine; by STK4/MST1 modification is found at Ser-15. Residues Lys-16, Lys-17, Lys-21, and Lys-24 each carry the N6-acetyllysine; alternate modification. Residues Lys-16, Lys-17, Lys-21, and Lys-24 each carry the N6-crotonyllysine; alternate modification. N6-lactoyllysine; alternate is present on residues Lys-16, Lys-17, Lys-21, and Lys-24. N6-(beta-hydroxybutyryl)lysine; alternate occurs at positions 17 and 21. Lys-17 is modified (N6-glutaryllysine; alternate). Residues Lys-21 and Lys-24 each carry the N6-(2-hydroxyisobutyryl)lysine; alternate modification. An N6-butyryllysine; alternate modification is found at Lys-21. Lys-21 participates in a covalent cross-link: Glycyl lysine isopeptide (Lys-Gly) (interchain with G-Cter in SUMO2); alternate. Lys-25 carries the post-translational modification N6-(2-hydroxyisobutyryl)lysine. The residue at position 35 (Lys-35) is an N6-(2-hydroxyisobutyryl)lysine; alternate. Lys-35 bears the N6-(beta-hydroxybutyryl)lysine; alternate mark. Lys-35 carries the N6-crotonyllysine; alternate modification. Lys-35 carries the N6-glutaryllysine; alternate modification. Lys-35 is modified (N6-succinyllysine; alternate). Lys-35 participates in a covalent cross-link: Glycyl lysine isopeptide (Lys-Gly) (interchain with G-Cter in ubiquitin); alternate. A PolyADP-ribosyl glutamic acid modification is found at Glu-36. At Ser-37 the chain carries Phosphoserine; by AMPK. N6-(2-hydroxyisobutyryl)lysine; alternate occurs at positions 44, 47, and 58. The residue at position 44 (Lys-44) is an N6-lactoyllysine; alternate. Lys-44 and Lys-47 each carry N6-glutaryllysine; alternate. Residue Lys-47 is modified to N6-methyllysine; alternate. Position 58 is an N6,N6-dimethyllysine; alternate (Lys-58). Arg-80 is subject to Dimethylated arginine. Residue Lys-86 is modified to N6-(2-hydroxyisobutyryl)lysine; alternate. Lys-86 is modified (N6-(beta-hydroxybutyryl)lysine; alternate). Lys-86 carries the post-translational modification N6-acetyllysine; alternate. Lys-86 is subject to N6-lactoyllysine; alternate. Lys-86 bears the N6,N6,N6-trimethyllysine; alternate mark. Residues Arg-87 and Arg-93 each carry the omega-N-methylarginine modification. Lys-109 bears the N6-(2-hydroxyisobutyryl)lysine; alternate mark. An N6-lactoyllysine; alternate modification is found at Lys-109. An N6-glutaryllysine; alternate modification is found at Lys-109. Lys-109 carries the N6-methyllysine; alternate modification. O-linked (GlcNAc) serine glycosylation is present at Ser-113. At Thr-116 the chain carries Phosphothreonine. Residues Lys-117 and Lys-121 each carry the N6-(2-hydroxyisobutyryl)lysine; alternate modification. An N6-(beta-hydroxybutyryl)lysine; alternate mark is found at Lys-117 and Lys-121. N6-lactoyllysine; alternate is present on residues Lys-117 and Lys-121. N6-glutaryllysine; alternate occurs at positions 117 and 121. N6-succinyllysine; alternate occurs at positions 117 and 121. N6-malonyllysine; alternate is present on Lys-117. Lys-117 carries the N6-methylated lysine; alternate modification. Lys-121 is covalently cross-linked (Glycyl lysine isopeptide (Lys-Gly) (interchain with G-Cter in ubiquitin); alternate).

Belongs to the histone H2B family. The nucleosome is a histone octamer containing two molecules each of H2A, H2B, H3 and H4 assembled in one H3-H4 heterotetramer and two H2A-H2B heterodimers. The octamer wraps approximately 147 bp of DNA. In terms of processing, monoubiquitination at Lys-35 (H2BK34Ub) by the MSL1/MSL2 dimer is required for histone H3 'Lys-4' (H3K4me) and 'Lys-79' (H3K79me) methylation and transcription activation at specific gene loci, such as HOXA9 and MEIS1 loci. Similarly, monoubiquitination at Lys-121 (H2BK120Ub) by the RNF20/40 complex gives a specific tag for epigenetic transcriptional activation and is also prerequisite for histone H3 'Lys-4' and 'Lys-79' methylation. It also functions cooperatively with the FACT dimer to stimulate elongation by RNA polymerase II. H2BK120Ub also acts as a regulator of mRNA splicing: deubiquitination by USP49 is required for efficient cotranscriptional splicing of a large set of exons. Post-translationally, phosphorylation at Ser-37 (H2BS36ph) by AMPK in response to stress promotes transcription. Phosphorylated on Ser-15 (H2BS14ph) by STK4/MST1 during apoptosis; which facilitates apoptotic chromatin condensation. Also phosphorylated on Ser-15 in response to DNA double strand breaks (DSBs), and in correlation with somatic hypermutation and immunoglobulin class-switch recombination. GlcNAcylation at Ser-113 promotes monoubiquitination of Lys-121. It fluctuates in response to extracellular glucose, and associates with transcribed genes. In terms of processing, ADP-ribosylated by PARP1 or PARP2 on Ser-7 (H2BS6ADPr) in response to DNA damage. H2BS6ADPr promotes recruitment of CHD1L. Mono-ADP-ribosylated on Glu-3 (H2BE2ADPr) by PARP3 in response to single-strand breaks. Poly ADP-ribosylation on Glu-36 (H2BE35ADPr) by PARP1 regulates adipogenesis: it inhibits phosphorylation at Ser-37 (H2BS36ph), thereby blocking expression of pro-adipogenetic genes. Post-translationally, crotonylation (Kcr) is specifically present in male germ cells and marks testis-specific genes in post-meiotic cells, including X-linked genes that escape sex chromosome inactivation in haploid cells. Crotonylation marks active promoters and enhancers and confers resistance to transcriptional repressors. It is also associated with post-meiotically activated genes on autosomes. Lactylated in macrophages by EP300/P300 by using lactoyl-CoA directly derived from endogenous or exogenous lactate, leading to stimulates gene transcription.

Its subcellular location is the nucleus. The protein localises to the chromosome. In terms of biological role, core component of nucleosome. Nucleosomes wrap and compact DNA into chromatin, limiting DNA accessibility to the cellular machineries which require DNA as a template. Histones thereby play a central role in transcription regulation, DNA repair, DNA replication and chromosomal stability. DNA accessibility is regulated via a complex set of post-translational modifications of histones, also called histone code, and nucleosome remodeling. This is Histone H2B type 1-B from Homo sapiens (Human).